The following is a 574-amino-acid chain: Septation ring formation regulator EzrA (574 aa).

Residues 1–7 (MSSGIIL) are Extracellular-facing. The helical transmembrane segment at 8 to 26 (LIVAIVLLVIIAYLIGVII) threads the bilayer. Residues 27–574 (RKRNDSMIGT…YERTREHIRF (548 aa)) are Cytoplasmic-facing. Coiled-coil stretches lie at residues 102 to 140 (NFIR…QEEK), 243 to 379 (RRLL…GQEI), and 459 to 520 (QLEA…SFEA).

Belongs to the EzrA family.

The protein resides in the cell membrane. Its function is as follows. Negative regulator of FtsZ ring formation; modulates the frequency and position of FtsZ ring formation. Inhibits FtsZ ring formation at polar sites. Interacts either with FtsZ or with one of its binding partners to promote depolymerization. The chain is Septation ring formation regulator EzrA from Streptococcus uberis (strain ATCC BAA-854 / 0140J).